The sequence spans 75 residues: Translation initiation factor IF-1, chloroplastic (75 aa).

The S1-like domain maps to 1–72; sequence MKKQNLIHAE…TKGRIIYRLS (72 aa).

This sequence belongs to the IF-1 family. Component of the 30S ribosomal translation pre-initiation complex which assembles on the 30S ribosome in the order IF-2 and IF-3, IF-1 and N-formylmethionyl-tRNA(fMet); mRNA recruitment can occur at any time during PIC assembly.

It localises to the plastid. Its subcellular location is the chloroplast. Functionally, one of the essential components for the initiation of protein synthesis. Stabilizes the binding of IF-2 and IF-3 on the 30S subunit to which N-formylmethionyl-tRNA(fMet) subsequently binds. Helps modulate mRNA selection, yielding the 30S pre-initiation complex (PIC). Upon addition of the 50S ribosomal subunit IF-1, IF-2 and IF-3 are released leaving the mature 70S translation initiation complex. This is Translation initiation factor IF-1, chloroplastic from Pinus koraiensis (Korean pine).